The primary structure comprises 242 residues: Ribose-5-phosphate isomerase A (242 aa).

Residues 39–42, 95–98, and 108–111 contribute to the substrate site; these read SGST, DGAD, and KGGG. The active-site Proton acceptor is Glu117. Lys135 contributes to the substrate binding site.

Belongs to the ribose 5-phosphate isomerase family. As to quaternary structure, homodimer.

The enzyme catalyses aldehydo-D-ribose 5-phosphate = D-ribulose 5-phosphate. It participates in carbohydrate degradation; pentose phosphate pathway; D-ribose 5-phosphate from D-ribulose 5-phosphate (non-oxidative stage): step 1/1. In terms of biological role, catalyzes the reversible conversion of ribose-5-phosphate to ribulose 5-phosphate. The polypeptide is Ribose-5-phosphate isomerase A (Chlamydia trachomatis serovar D (strain ATCC VR-885 / DSM 19411 / UW-3/Cx)).